The sequence spans 450 residues: Glutathione reductase (450 aa).

6 residues coordinate FAD: Ser14, Gly15, Glu34, Thr41, Cys42, and Lys50. Ser14 contacts glutathione. Cys42 and Cys47 are oxidised to a cystine. Tyr99 serves as a coordination point for glutathione. Ala115 contacts FAD. Positions 175, 178, 181, 198, 204, and 262 each coordinate NADP(+). Asp303 lines the FAD pocket. NADP(+) is bound at residue Glu309. Thr311 provides a ligand contact to FAD. Residue Arg319 coordinates glutathione. Val342 is a binding site for NADP(+). His439 provides a ligand contact to FAD. The Proton acceptor role is filled by His439.

Belongs to the class-I pyridine nucleotide-disulfide oxidoreductase family. As to quaternary structure, homodimer. Requires FAD as cofactor.

It is found in the cytoplasm. The catalysed reaction is 2 glutathione + NADP(+) = glutathione disulfide + NADPH + H(+). Functionally, catalyzes the reduction of glutathione disulfide (GSSG) to reduced glutathione (GSH). Constitutes the major mechanism to maintain a high GSH:GSSG ratio in the cytosol. The protein is Glutathione reductase (gor) of Escherichia coli (strain K12).